A 125-amino-acid polypeptide reads, in one-letter code: Large-conductance mechanosensitive channel (125 aa).

Transmembrane regions (helical) follow at residues 19–39, 42–62, and 66–86; these read VGVI…KYII, FLGL…IGNA, and VGSF…VFLM.

The protein belongs to the MscL family. As to quaternary structure, homopentamer.

The protein resides in the cell membrane. Its function is as follows. Channel that opens in response to stretch forces in the membrane lipid bilayer. May participate in the regulation of osmotic pressure changes within the cell. This is Large-conductance mechanosensitive channel from Ligilactobacillus salivarius (strain UCC118) (Lactobacillus salivarius).